The following is a 287-amino-acid chain: Pyridoxal kinase PdxY (287 aa).

Residues S10 and 45–46 (TQ) contribute to the substrate site. Residues D112, A144, E149, K182, and 209-212 (RPLV) contribute to the ATP site. Residue D224 coordinates substrate.

This sequence belongs to the pyridoxine kinase family. PdxY subfamily. In terms of assembly, homodimer. The cofactor is Mg(2+).

The enzyme catalyses pyridoxal + ATP = pyridoxal 5'-phosphate + ADP + H(+). It participates in cofactor metabolism; pyridoxal 5'-phosphate salvage; pyridoxal 5'-phosphate from pyridoxal: step 1/1. In terms of biological role, pyridoxal kinase involved in the salvage pathway of pyridoxal 5'-phosphate (PLP). Catalyzes the phosphorylation of pyridoxal to PLP. The sequence is that of Pyridoxal kinase PdxY from Escherichia coli O157:H7.